Reading from the N-terminus, the 93-residue chain is Large ribosomal subunit protein uL23cz/uL23cy (93 aa).

The protein belongs to the universal ribosomal protein uL23 family. Part of the 50S ribosomal subunit.

The protein localises to the plastid. Its subcellular location is the chloroplast. In terms of biological role, binds to 23S rRNA. This is Large ribosomal subunit protein uL23cz/uL23cy (rpl23-A) from Populus alba (White poplar).